The primary structure comprises 307 residues: 4-hydroxybenzoate octaprenyltransferase (307 aa).

The next 7 membrane-spanning stretches (helical) occupy residues 27-47 (AGWL…AGGF), 50-70 (WHLL…GCCI), 101-121 (LAVG…TNAL), 142-162 (CVAM…PMAF), 179-199 (AAVP…VLAY), 239-259 (LLAW…AAGL), and 285-305 (FRLN…DLGW).

Belongs to the UbiA prenyltransferase family. Mg(2+) is required as a cofactor.

It localises to the cell inner membrane. It catalyses the reaction all-trans-octaprenyl diphosphate + 4-hydroxybenzoate = 4-hydroxy-3-(all-trans-octaprenyl)benzoate + diphosphate. Its pathway is cofactor biosynthesis; ubiquinone biosynthesis. Catalyzes the prenylation of para-hydroxybenzoate (PHB) with an all-trans polyprenyl group. Mediates the second step in the final reaction sequence of ubiquinone-8 (UQ-8) biosynthesis, which is the condensation of the polyisoprenoid side chain with PHB, generating the first membrane-bound Q intermediate 3-octaprenyl-4-hydroxybenzoate. This chain is 4-hydroxybenzoate octaprenyltransferase, found in Methylibium petroleiphilum (strain ATCC BAA-1232 / LMG 22953 / PM1).